Reading from the N-terminus, the 298-residue chain is 1D-myo-inositol 2-acetamido-2-deoxy-alpha-D-glucopyranoside deacetylase (298 aa).

3 residues coordinate Zn(2+): His14, Asp17, and His148. The disordered stretch occupies residues 277-298 (RGPAGPDGREHDLFAGLDGPAT).

Belongs to the MshB deacetylase family. Zn(2+) serves as cofactor.

The catalysed reaction is 1D-myo-inositol 2-acetamido-2-deoxy-alpha-D-glucopyranoside + H2O = 1D-myo-inositol 2-amino-2-deoxy-alpha-D-glucopyranoside + acetate. In terms of biological role, catalyzes the deacetylation of 1D-myo-inositol 2-acetamido-2-deoxy-alpha-D-glucopyranoside (GlcNAc-Ins) in the mycothiol biosynthesis pathway. The protein is 1D-myo-inositol 2-acetamido-2-deoxy-alpha-D-glucopyranoside deacetylase of Nocardia farcinica (strain IFM 10152).